The chain runs to 303 residues: Recombination-associated protein RdgC (303 aa).

It belongs to the RdgC family.

The protein resides in the cytoplasm. It is found in the nucleoid. In terms of biological role, may be involved in recombination. The protein is Recombination-associated protein RdgC of Shewanella piezotolerans (strain WP3 / JCM 13877).